The sequence spans 1275 residues: Serine/threonine-protein kinase ULK4 (1275 aa).

A Protein kinase domain is found at 4–280; that stretch reads FILYEEIGRG…WTRLLQHSFW (277 aa). D121 serves as the catalytic Proton acceptor. Disordered stretches follow at residues 299 to 346 and 359 to 393; these read SRNT…EFRP and FLLS…SPLT. Over residues 336 to 346 the composition is skewed to basic and acidic residues; it reads FRLENPTEFRP. Composition is skewed to polar residues over residues 363–373 and 384–393; these read SRPTPRTSTAV and CSPQKTSPLT. 6 HEAT repeats span residues 727-765, 842-880, 926-964, 1025-1063, 1151-1189, and 1213-1253; these read LIQE…YNRE, LKMC…ILSH, STVV…LLVN, LVEE…NLVA, NRPL…LYGG, and PKEQ…LAPG.

This sequence belongs to the protein kinase superfamily. Ser/Thr protein kinase family. APG1/unc-51/ULK1 subfamily.

The catalysed reaction is L-seryl-[protein] + ATP = O-phospho-L-seryl-[protein] + ADP + H(+). The enzyme catalyses L-threonyl-[protein] + ATP = O-phospho-L-threonyl-[protein] + ADP + H(+). May be involved in the remodeling of cytoskeletal components, such as alpha-tubulin, and in this way regulates neurite branching and elongation, as well as cell motility. The protein is Serine/threonine-protein kinase ULK4 (ULK4) of Pongo abelii (Sumatran orangutan).